We begin with the raw amino-acid sequence, 501 residues long: Beta-secretase 1 (501 aa).

Residues 1–21 (MAQALPWLLLWMGSGVLPAHG) form the signal peptide. A propeptide spanning residues 22-45 (SQPGIRLPLRSGLGGAPLGLRLPR) is cleaved from the precursor. The Extracellular segment spans residues 22–457 (SQPGIRLPLR…PQTDESTLMT (436 aa)). The interval 39–58 (LGLRLPRETDEESEEPGRRG) is disordered. Residues 75–416 (YYVEMTLGSP…DRARKRIGFA (342 aa)) enclose the Peptidase A1 domain. The active site involves aspartate 93. Residue lysine 126 is modified to N6-acetyllysine. N-linked (GlcNAc...) asparagine glycosylation is found at asparagine 153, asparagine 172, and asparagine 223. Intrachain disulfides connect cysteine 216-cysteine 420, cysteine 278-cysteine 443, and cysteine 330-cysteine 380. N6-acetyllysine is present on residues lysine 275, lysine 279, and lysine 285. Residue aspartate 289 is part of the active site. N6-acetyllysine is present on residues lysine 299, lysine 300, and lysine 307. Asparagine 354 is a glycosylation site (N-linked (GlcNAc...) asparagine). Residues 458–478 (IAYVMAAICALFMLPLCLMVC) form a helical membrane-spanning segment. S-palmitoyl cysteine attachment occurs at residues cysteine 474, cysteine 478, cysteine 482, and cysteine 485. Residues 479-501 (QWRCLRCLRHQHDDFADDISLLK) lie on the Cytoplasmic side of the membrane. The interaction with RTN3 stretch occupies residues 479–501 (QWRCLRCLRHQHDDFADDISLLK). Positions 496–500 (DISLL) match the DXXLL motif. Serine 498 is modified (phosphoserine). Lysine 501 is covalently cross-linked (Glycyl lysine isopeptide (Lys-Gly) (interchain with G-Cter in ubiquitin)).

It belongs to the peptidase A1 family. In terms of assembly, monomer. Interacts (via DXXLL motif) with GGA1, GGA2 and GGA3 (via their VHS domain); the interaction highly increases when BACE1 is phosphorylated at Ser-498. Interacts with RTN1; RTN2; RTN3 and RTN4; the interaction leads to inhibition of amyloid precursor protein processing. Interacts with SNX6. Interacts with PCSK9. Interacts with NAT8 and NAT8B. Interacts with BIN1. Interacts (via extracellular domain) with ADAM10 (via extracellular domain). Interacts with SORL1; this interaction may affect binding with APP and hence reduce APP cleavage. Interacts with NRDC AND NRG1. Post-translationally, palmitoylation mediates lipid raft localization. Acetylated in the endoplasmic reticulum at Lys-126, Lys-275, Lys-279, Lys-285, Lys-299, Lys-300 and Lys-307. Acetylation by NAT8 and NAT8B is transient and deacetylation probably occurs in the Golgi. Acetylation regulates the maturation, the transport to the plasma membrane, the stability and the expression of the protein. In terms of processing, ubiquitinated at Lys-501, ubiquitination leads to lysosomal degradation. Monoubiquitinated and 'Lys-63'-linked polyubitinated. Deubiquitnated by USP8; inhibits lysosomal degradation. Post-translationally, phosphorylation at Ser-498 is required for interaction with GGA1 and retrograded transport from endosomal compartments to the trans-Golgi network. Non-phosphorylated BACE1 enters a direct recycling route to the cell surface. N-Glycosylated. Addition of a bisecting N-acetylglucosamine by MGAT3 blocks lysosomal targeting, further degradation and is required for maintaining stability under stress conditions.

The protein localises to the cell membrane. It localises to the golgi apparatus. The protein resides in the trans-Golgi network. Its subcellular location is the endoplasmic reticulum. It is found in the endosome. The protein localises to the cell surface. It localises to the cytoplasmic vesicle membrane. The protein resides in the membrane raft. Its subcellular location is the lysosome. It is found in the late endosome. The protein localises to the early endosome. It localises to the recycling endosome. The protein resides in the cell projection. Its subcellular location is the axon. It is found in the dendrite. It catalyses the reaction Broad endopeptidase specificity. Cleaves Glu-Val-Asn-Leu-|-Asp-Ala-Glu-Phe in the Swedish variant of Alzheimer's amyloid precursor protein.. Inhibited by RTN3 and RTN4. Its function is as follows. Responsible for the proteolytic processing of the amyloid precursor protein (APP). Cleaves at the N-terminus of the A-beta peptide sequence, between residues 671 and 672 of APP, leads to the generation and extracellular release of beta-cleaved soluble APP, and a corresponding cell-associated C-terminal fragment which is later released by gamma-secretase. Cleaves CHL1. The sequence is that of Beta-secretase 1 (BACE1) from Bos taurus (Bovine).